Here is a 319-residue protein sequence, read N- to C-terminus: tRNA uridine(34) hydroxylase (319 aa).

The region spanning 124-218 (LDEDTVILDA…YGKNEETKGE (95 aa)) is the Rhodanese domain. C178 (cysteine persulfide intermediate) is an active-site residue.

It belongs to the TrhO family.

It carries out the reaction uridine(34) in tRNA + AH2 + O2 = 5-hydroxyuridine(34) in tRNA + A + H2O. Its function is as follows. Catalyzes oxygen-dependent 5-hydroxyuridine (ho5U) modification at position 34 in tRNAs. This is tRNA uridine(34) hydroxylase from Listeria monocytogenes serotype 4a (strain HCC23).